The primary structure comprises 180 residues: Large ribosomal subunit protein uL6 (180 aa).

This sequence belongs to the universal ribosomal protein uL6 family. As to quaternary structure, part of the 50S ribosomal subunit.

Its function is as follows. This protein binds to the 23S rRNA, and is important in its secondary structure. It is located near the subunit interface in the base of the L7/L12 stalk, and near the tRNA binding site of the peptidyltransferase center. The sequence is that of Large ribosomal subunit protein uL6 from Picrophilus torridus (strain ATCC 700027 / DSM 9790 / JCM 10055 / NBRC 100828 / KAW 2/3).